We begin with the raw amino-acid sequence, 704 residues long: Polyribonucleotide nucleotidyltransferase (704 aa).

Residues Asp490 and Asp496 each contribute to the Mg(2+) site. Positions 557–616 constitute a KH domain; it reads PKIEMIQIKPAKIKDVIGKGGETINSIIDETGVKIDIDQDGNVSIASSDAEMIKKAIKII. One can recognise an S1 motif domain in the interval 626 to 694; that stretch reads GQVYLAKVVR…KQGRVNVSRK (69 aa).

It belongs to the polyribonucleotide nucleotidyltransferase family. Requires Mg(2+) as cofactor.

The protein localises to the cytoplasm. It carries out the reaction RNA(n+1) + phosphate = RNA(n) + a ribonucleoside 5'-diphosphate. In terms of biological role, involved in mRNA degradation. Catalyzes the phosphorolysis of single-stranded polyribonucleotides processively in the 3'- to 5'-direction. The chain is Polyribonucleotide nucleotidyltransferase from Enterococcus faecalis (strain ATCC 700802 / V583).